The primary structure comprises 369 residues: Sulfate permease 2, chloroplastic (369 aa).

The tract at residues 1–21 (MASTTLLQPALGLPSRVGPRS) is disordered. Residues 1 to 82 (MASTTLLQPA…QQSRGDLLVS (82 aa)) constitute a chloroplast transit peptide. The next 5 membrane-spanning stretches (helical) occupy residues 110–130 (VGVA…NVFV), 156–176 (TLML…VAAI), 187–207 (VFLM…TGLM), 229–249 (VVFA…PFVV), and 335–355 (TEAA…TLWI). The region spanning 153 to 356 (LKMTLMLAFV…ALALGTLWIK (204 aa)) is the ABC transmembrane type-1 domain.

Belongs to the ATP-binding cassette (ABC) (TC 3.A.1) superfamily. Part of the chloroplast sulfate permease holocomplex. May form a heterodimer with SLUP1.

The protein localises to the plastid. It is found in the chloroplast membrane. Its function is as follows. Part of the ABC-type chloroplast envelope-localized sulfate transporter. The chain is Sulfate permease 2, chloroplastic (SULP2) from Chlamydomonas reinhardtii (Chlamydomonas smithii).